We begin with the raw amino-acid sequence, 126 residues long: Protein C10 (126 aa).

At A2 the chain carries N-acetylalanine.

Belongs to the UPF0456 family. As to expression, ubiquitously expressed, with higher expression in lung.

It is found in the cytoplasm. Functionally, in brain, may be required for corpus callosum development. This is Protein C10 (Grcc10) from Mus musculus (Mouse).